A 194-amino-acid chain; its full sequence is Fibroblast growth factor 7 (194 aa).

Positions 1-31 (MRKWILTWILPTLLYRSCFHIICLVGTISLA) are cleaved as a signal peptide. Asn-45 carries an N-linked (GlcNAc...) asparagine glycan.

This sequence belongs to the heparin-binding growth factors family. Interacts with FGFBP1. Interacts with FGFR2. Affinity between fibroblast growth factors (FGFs) and their receptors is increased by heparan sulfate glycosaminoglycans that function as coreceptors.

It localises to the secreted. Its function is as follows. Plays an important role in the regulation of embryonic development, cell proliferation and cell differentiation. Required for normal branching morphogenesis. Growth factor active on keratinocytes. Possible major paracrine effector of normal epithelial cell proliferation. This chain is Fibroblast growth factor 7 (FGF7), found in Canis lupus familiaris (Dog).